We begin with the raw amino-acid sequence, 136 residues long: Histone H3, embryonic (136 aa).

Residues 1–43 (MARTKQTARKSTGGKAPRKQLATKAARKSAPATGGVKKPHRYR) are disordered. Lys5 bears the N6-methylated lysine mark. The residue at position 10 (Lys10) is an N6-acetyllysine; alternate. Position 10 is an N6-methylated lysine; alternate (Lys10). A Phosphoserine modification is found at Ser11. N6-acetyllysine occurs at positions 15 and 24. An N6-methylated lysine mark is found at Lys28, Lys37, and Lys80.

It belongs to the histone H3 family. As to quaternary structure, the nucleosome is a histone octamer containing two molecules each of H2A, H2B, H3 and H4 assembled in one H3-H4 heterotetramer and two H2A-H2B heterodimers. The octamer wraps approximately 147 bp of DNA. In terms of processing, acetylation is generally linked to gene activation. Methylation at Lys-5 is linked to gene activation. Methylation at Lys-10 is linked to gene repression.

It is found in the nucleus. Its subcellular location is the chromosome. In terms of biological role, core component of nucleosome. Nucleosomes wrap and compact DNA into chromatin, limiting DNA accessibility to the cellular machineries which require DNA as a template. Histones thereby play a central role in transcription regulation, DNA repair, DNA replication and chromosomal stability. DNA accessibility is regulated via a complex set of post-translational modifications of histones, also called histone code, and nucleosome remodeling. The chain is Histone H3, embryonic from Strongylocentrotus purpuratus (Purple sea urchin).